An 83-amino-acid chain; its full sequence is MSSGGLLLLLGLLTLWEVLTPVSSKDRPEFCKLPADTGRCKGKFPAFYYHPVHRTCLEFIYGGCKGNPNNFKTIDECERTCAA.

The first 24 residues, 1–24 (MSSGGLLLLLGLLTLWEVLTPVSS), serve as a signal peptide directing secretion. The region spanning 31 to 81 (CKLPADTGRCKGKFPAFYYHPVHRTCLEFIYGGCKGNPNNFKTIDECERTC) is the BPTI/Kunitz inhibitor domain. Intrachain disulfides connect C31-C81, C40-C64, and C56-C77.

It belongs to the venom Kunitz-type family. Expressed by the venom gland.

It is found in the secreted. Its function is as follows. Serine protease inhibitor. The chain is Kunitz-type serine protease inhibitor superbin-1 from Austrelaps superbus (Lowland copperhead snake).